Consider the following 321-residue polypeptide: tRNA dimethylallyltransferase (321 aa).

24-31 contacts ATP; it reads GPTASGKS. 26-31 contributes to the substrate binding site; that stretch reads TASGKS. Interaction with substrate tRNA stretches follow at residues 49–52 and 172–176; these read DSMQ and QRIVR.

This sequence belongs to the IPP transferase family. In terms of assembly, monomer. Requires Mg(2+) as cofactor.

It carries out the reaction adenosine(37) in tRNA + dimethylallyl diphosphate = N(6)-dimethylallyladenosine(37) in tRNA + diphosphate. Catalyzes the transfer of a dimethylallyl group onto the adenine at position 37 in tRNAs that read codons beginning with uridine, leading to the formation of N6-(dimethylallyl)adenosine (i(6)A). The polypeptide is tRNA dimethylallyltransferase (Mesorhizobium japonicum (strain LMG 29417 / CECT 9101 / MAFF 303099) (Mesorhizobium loti (strain MAFF 303099))).